We begin with the raw amino-acid sequence, 63 residues long: 2-hydroxymuconate tautomerase (63 aa).

Residue proline 2 is the Proton acceptor; via imino nitrogen of the active site.

Belongs to the 4-oxalocrotonate tautomerase family. In terms of assembly, homohexamer.

The catalysed reaction is (2Z,4E)-2-hydroxyhexa-2,4-dienedioate = (3E)-2-oxohex-3-enedioate. It participates in aromatic compound metabolism; salicylate degradation. In terms of biological role, catalyzes the ketonization of 2-hydroxymuconate stereoselectively to yield 2-oxo-3-hexenedioate. The chain is 2-hydroxymuconate tautomerase (nahJ) from Pseudomonas putida (Arthrobacter siderocapsulatus).